A 274-amino-acid chain; its full sequence is Putative deoxyribonuclease TATDN1 homolog (274 aa).

4 residues coordinate a divalent metal cation: Glu-105, His-139, His-162, and Asp-208.

It belongs to the metallo-dependent hydrolases superfamily. TatD-type hydrolase family. The cofactor is a divalent metal cation.

Its subcellular location is the nucleus. In terms of biological role, putative deoxyribonuclease. The protein is Putative deoxyribonuclease TATDN1 homolog of Enterocytozoon bieneusi (strain H348) (Microsporidian parasite).